The sequence spans 72 residues: Bowman-Birk type proteinase inhibitor 2a (72 aa).

7 disulfides stabilise this stretch: C8/C61, C9/C24, C12/C57, C14/C22, C31/C38, C35/C50, and C40/C48.

Dimer.

Inhibits trypsin (IC(50)=0.9 nM) and alpha-chymotrypsin (IC(50)=1.1 nM). The polypeptide is Bowman-Birk type proteinase inhibitor 2a (Lathyrus sativus (White vetchling)).